The sequence spans 519 residues: Cytosol aminopeptidase (519 aa).

The residue at position 42 (S42) is a Phosphoserine. An N6-succinyllysine modification is found at K45. Phosphoserine is present on S54. Residues K61 and K103 each carry the N6-succinyllysine modification. Residues S180 and S194 each carry the phosphoserine modification. L202 and M203 together coordinate Zn(2+). K221 is modified (N6-acetyllysine; alternate). An N6-succinyllysine; alternate modification is found at K221. At S238 the chain carries Phosphoserine. Zn(2+)-binding residues include K282 and D287. Substrate-binding residues include K282, D287, S292, and K294. Residue D287 coordinates Mg(2+). K294 is an active-site residue. Positions 303, 305, 364, and 366 each coordinate Zn(2+). The substrate site is built by D305 and D364. The Mg(2+) site is built by D364 and E366. Residue R368 is part of the active site. The residue at position 455 (K455) is an N6-acetyllysine; alternate. An N6-succinyllysine; alternate modification is found at K455. K476 is modified (N6-succinyllysine). K489 carries the N6-acetyllysine; alternate modification. The residue at position 489 (K489) is an N6-succinyllysine; alternate.

It belongs to the peptidase M17 family. As to quaternary structure, homohexamer. Zn(2+) is required as a cofactor. It depends on Mn(2+) as a cofactor.

The protein localises to the cytoplasm. It carries out the reaction Release of an N-terminal amino acid, Xaa-|-Yaa-, in which Xaa is preferably Leu, but may be other amino acids including Pro although not Arg or Lys, and Yaa may be Pro. Amino acid amides and methyl esters are also readily hydrolyzed, but rates on arylamides are exceedingly low.. It catalyses the reaction an S-substituted L-cysteinylglycine + H2O = an S-substituted L-cysteine + glycine. The catalysed reaction is L-cysteinylglycine + H2O = L-cysteine + glycine. The enzyme catalyses S-benzyl-L-cysteinylglycine + H2O = S-benzyl-L-cysteine + glycine. It carries out the reaction Release of N-terminal proline from a peptide.. Bimane-S-cysteinylglycine-hydrolyzing activity is inhibited by o-phenanthroline or bestatin, and is activated by the addition of zinc chloride. In terms of biological role, cytosolic metallopeptidase that catalyzes the removal of unsubstituted N-terminal hydrophobic amino acids from various peptides. The presence of Zn(2+) ions is essential for the peptidase activity, and the association with other cofactors can modulate the substrate spectificity of the enzyme. For instance, in the presence of Mn(2+), it displays a specific Cys-Gly hydrolyzing activity of Cys-Gly-S-conjugates. Involved in the metabolism of glutathione and in the degradation of glutathione S-conjugates, which may play a role in the control of the cell redox status. The polypeptide is Cytosol aminopeptidase (Rattus norvegicus (Rat)).